Reading from the N-terminus, the 330-residue chain is Probable NAD(P)H-dependent D-xylose reductase xyl1 (330 aa).

Catalysis depends on Y50, which acts as the Proton donor. H112 is a binding site for substrate. NAD(+) contacts are provided by residues 166-167, 215-224, and 271-281; these read SN, SSFGPLSFLE, and KSNNPTRLAQN.

This sequence belongs to the aldo/keto reductase family.

The catalysed reaction is xylitol + NAD(+) = D-xylose + NADH + H(+). It carries out the reaction xylitol + NADP(+) = D-xylose + NADPH + H(+). It participates in carbohydrate metabolism; D-xylose degradation. Catalyzes the initial reaction in the xylose utilization pathway by reducing D-xylose into xylitol. Xylose is a major component of hemicelluloses such as xylan. Most fungi utilize D-xylose via three enzymatic reactions, xylose reductase (XR), xylitol dehydrogenase (XDH), and xylulokinase, to form xylulose 5-phosphate, which enters pentose phosphate pathway. This is Probable NAD(P)H-dependent D-xylose reductase xyl1 (xyl1) from Aspergillus clavatus (strain ATCC 1007 / CBS 513.65 / DSM 816 / NCTC 3887 / NRRL 1 / QM 1276 / 107).